The following is a 418-amino-acid chain: AP-1 complex subunit mu (418 aa).

One can recognise an MHD domain in the interval Asn-176–Arg-417.

This sequence belongs to the adaptor complexes medium subunit family. As to quaternary structure, adaptor protein complex 1 (AP-1) is a heterotetramer composed of two large adaptins (gamma- and beta'-type subunits), a medium adaptin (mu-type subunit AP47) and a small adaptin (sigma-type subunit AP19). Regulated by phosphorylation.

It localises to the golgi apparatus. The protein resides in the cytoplasmic vesicle. It is found in the clathrin-coated vesicle membrane. Component of the adapter complexes which link clathrin to receptors in coated vesicles. Clathrin-associated protein complexes are believed to interact with the cytoplasmic tails of membrane proteins, leading to their selection and concentration. AP47 is a subunit of the plasma membrane adapter. This is AP-1 complex subunit mu from Diplobatis ommata (Ocellated electric ray).